The primary structure comprises 115 residues: NADH-ubiquinone oxidoreductase chain 3 (115 aa).

The next 3 helical transmembrane spans lie at 4–24, 55–75, and 84–104; these read IVILFINATLSLGLITVAFWL, FFLIGITFLLFDLEITLLLPL, and TYFTMLVSFLLVSVLALGLMY.

This sequence belongs to the complex I subunit 3 family. In terms of assembly, core subunit of respiratory chain NADH dehydrogenase (Complex I) which is composed of 45 different subunits. Interacts with TMEM186. Interacts with TMEM242.

Its subcellular location is the mitochondrion inner membrane. The enzyme catalyses a ubiquinone + NADH + 5 H(+)(in) = a ubiquinol + NAD(+) + 4 H(+)(out). Its function is as follows. Core subunit of the mitochondrial membrane respiratory chain NADH dehydrogenase (Complex I) which catalyzes electron transfer from NADH through the respiratory chain, using ubiquinone as an electron acceptor. Essential for the catalytic activity of complex I. This chain is NADH-ubiquinone oxidoreductase chain 3, found in Eligmodontia typus (Highland gerbil mouse).